Here is a 432-residue protein sequence, read N- to C-terminus: MKHVRIFATLLALLVISVTPAVIHSEDVYREVTASGAHNLTLAVDNPRNLGGADDAALARDVAEVLRFDMTLAGPFSVMAPPAGTSPGGIRPGEFDLDSWRNAGVDLLVKSGYTITGDSVTMEFRLYNATQGRELAAKRYTGKRSDLRRITHTFSDDIMQTMTGERGPFTGKIAFVSTESGNKEIYLMDYDGHNVQRLTKNRSINLNPDFSPNGRELAYTSYRRGNPDLFRREIFTGTEAVVSSHRGINVTGTWSPDGKQLALAMSRDGNSEIYAISRDGRDPRRLTTHQAIDVSPAWSPDGKRIAFVSDRLGKPQVFIMNADGSDVRRLTTSGAYNVSPRWSPKGDRLVYCRQEGGFQIYSIATDGTGDTRLTSEGSNEHPRWSPDGRFLTFSSTRDGGEAIYVMRSDGSGQTRVYRSKGKASHPTWSPRW.

The first 21 residues, 1-21, serve as a signal peptide directing secretion; the sequence is MKHVRIFATLLALLVISVTPA.

This sequence belongs to the TolB family. As to quaternary structure, the Tol-Pal system is composed of five core proteins: the inner membrane proteins TolA, TolQ and TolR, the periplasmic protein TolB and the outer membrane protein Pal. They form a network linking the inner and outer membranes and the peptidoglycan layer.

The protein localises to the periplasm. Part of the Tol-Pal system, which plays a role in outer membrane invagination during cell division and is important for maintaining outer membrane integrity. The sequence is that of Tol-Pal system protein TolB from Geobacter sulfurreducens (strain ATCC 51573 / DSM 12127 / PCA).